Here is a 748-residue protein sequence, read N- to C-terminus: Phosphoenolpyruvate-dependent phosphotransferase system (748 aa).

In terms of domain architecture, GAF spans 1-127 (MLTRLREIVE…RRQLLGVLVV (127 aa)). The tract at residues 128-170 (QQRELRQYDESEESFLVTLATQMAAILSQSQVTALFGQYRQTR) is linker. Residues 171 to 748 (IRALPAAPGV…GMGGLIRGGL (578 aa)) form a PTS EI region. The active-site Tele-phosphohistidine intermediate is histidine 356. Residues arginine 462 and arginine 498 each contribute to the phosphoenolpyruvate site. Residues glutamate 597 and aspartate 621 each coordinate Mg(2+). Phosphoenolpyruvate is bound by residues 620-621 (ND) and arginine 631. Residue cysteine 668 is the Proton donor of the active site.

Belongs to the PEP-utilizing enzyme family. It depends on Mg(2+) as a cofactor.

It is found in the cytoplasm. The enzyme catalyses L-histidyl-[protein] + phosphoenolpyruvate = N(pros)-phospho-L-histidyl-[protein] + pyruvate. In terms of biological role, component of the phosphoenolpyruvate-dependent nitrogen-metabolic phosphotransferase system (nitrogen-metabolic PTS), that seems to be involved in regulating nitrogen metabolism. Enzyme I-Ntr transfers the phosphoryl group from phosphoenolpyruvate (PEP) to the phosphoryl carrier protein (NPr). Could function in the transcriptional regulation of sigma-54 dependent operons in conjunction with the NPr (PtsO) and EIIA-Ntr (PtsN) proteins. Enzyme I-Ntr is specific for NPr. The chain is Phosphoenolpyruvate-dependent phosphotransferase system (ptsP) from Salmonella typhimurium (strain LT2 / SGSC1412 / ATCC 700720).